The following is a 267-amino-acid chain: Putative carbamate hydrolase RutD (267 aa).

In terms of domain architecture, AB hydrolase-1 spans 14-115; sequence PTLVLSAGLG…EKLVVVNGWP (102 aa).

It belongs to the AB hydrolase superfamily. Hydrolase RutD family.

The enzyme catalyses carbamate + 2 H(+) = NH4(+) + CO2. In terms of biological role, involved in pyrimidine catabolism. May facilitate the hydrolysis of carbamate, a reaction that can also occur spontaneously. The chain is Putative carbamate hydrolase RutD from Serratia proteamaculans (strain 568).